Here is a 394-residue protein sequence, read N- to C-terminus: MPDYQYKRIFLVVMDSVGIGEAPDAAEFNDVGADTLGHIAEKMNGLHMPNMAKLGLSHIKEIKGIPADEKPLAYYGKMQEASNGKDTMTGHWEIMGLYIDTPFRVFPDGFPDELLNELKEKTGRGIIGNKPASGTEILDELGEEHMKTGDLIVYTSADSVLQIAAHEEVVPLDELYRICEIARELTLDEKYMVGRIIARPFVGEPGAFVRTPNRHDYALKPFDRTVMNELKDDGLDVIAIGKISDIYDGEGITSSLRTKSNMDGMDKLVDTLKTDFTGISFLNLVDFDALYGHRRDPEGYGKALEEFDARLPEVFDLLKEDDLLVITADHGNDPVHHGTDHTREYVPLIAYSKKHQGANELPTSKTFADLGATVADNFKTTMPKYGTSFLSKLK.

The Mn(2+) site is built by Asp-15, Asp-288, His-293, Asp-329, His-330, and His-341.

Belongs to the phosphopentomutase family. Mn(2+) serves as cofactor.

The protein localises to the cytoplasm. The enzyme catalyses 2-deoxy-alpha-D-ribose 1-phosphate = 2-deoxy-D-ribose 5-phosphate. It catalyses the reaction alpha-D-ribose 1-phosphate = D-ribose 5-phosphate. The protein operates within carbohydrate degradation; 2-deoxy-D-ribose 1-phosphate degradation; D-glyceraldehyde 3-phosphate and acetaldehyde from 2-deoxy-alpha-D-ribose 1-phosphate: step 1/2. Its function is as follows. Isomerase that catalyzes the conversion of deoxy-ribose 1-phosphate (dRib-1-P) and ribose 1-phosphate (Rib-1-P) to deoxy-ribose 5-phosphate (dRib-5-P) and ribose 5-phosphate (Rib-5-P), respectively. The polypeptide is Phosphopentomutase (Bacillus pumilus (strain SAFR-032)).